A 775-amino-acid chain; its full sequence is MSQDVFKHLTSKQVQRTRARSFGASFERPLASFLPKKENKNLLSNAARVKLLTFSSSSPYSFSYSPVLSRDANDGYIPLDTSSRANLWESVTDYDLQHANEPLVGNYYISTEALGDGLNRSPFTINPEKRRSLSDISYVPIPHKEHSNWPVHCSSQAIVTTSNTTFSIWSANDYFCLLFGYAGSQLNRHSVFDIFPKSFSSHLSNLIVSFPIDNEHERILFCGDVFPVITVDGVRLMDFWVKEKQGKLIWILEFVEESYIDIKLQDGVAVDERTEQPLTSDLLPSRLPKTWDQRLYLTTKTTEGYYCPSMIYPLSKSSFQYIIFHYAAGLLFINSDFKIISLNEALFESMLGYSDLLTKDISLIFPDFKLVLQQLADSHALDPGRVVSEIHVRHAYRTCTADKMKKADYPYLIHSDGNIIQIDCQIISVSPHSVKSNEPAFGVWLIFDSVDNRASDFVRSMRSSVILEEVVISDESEEEEDLSADEDYVDSEWEVVPHNIASYTTIKELGIGAYGQVKLATYKSNKVHEVILKSISKSRILLDSWMRDKDLGTVPMEISILHFLKAHSHPNIVKMITFFEDNENYYLLTEPQKPGIDLFDYIELKPSISEKESKAIFFQIALAVAHLHSFDIIHRDIKDENVILEGNGCARLIDFGSSSLTKNGPFDTFRGTVGFAAPELLRGEKYLGKEQDIWALGILLYTIVYRENPYYNIEEILDAKLRIPFELSKDNVDLICRMLDRNVHDRITIEETLQHHWFDDIRYLDTSHIRIPLSS.

Residues Ser-132 and Ser-134 each carry the phosphoserine modification. Residues 503-758 (YTTIKELGIG…IEETLQHHWF (256 aa)) form the Protein kinase domain. ATP contacts are provided by residues 509 to 517 (LGIGAYGQV) and Lys-533. Asp-636 acts as the Proton acceptor in catalysis.

The protein belongs to the protein kinase superfamily. Ser/Thr protein kinase family.

Its subcellular location is the cytoplasm. The protein localises to the nucleus. It carries out the reaction L-seryl-[protein] + ATP = O-phospho-L-seryl-[protein] + ADP + H(+). The catalysed reaction is L-threonyl-[protein] + ATP = O-phospho-L-threonyl-[protein] + ADP + H(+). This chain is Serine/threonine-protein kinase ppk6 (ppk6), found in Schizosaccharomyces pombe (strain 972 / ATCC 24843) (Fission yeast).